Reading from the N-terminus, the 295-residue chain is Pyridoxal 5'-phosphate synthase subunit PdxS (295 aa).

D25 contacts D-ribose 5-phosphate. K82 serves as the catalytic Schiff-base intermediate with D-ribose 5-phosphate. Position 154 (G154) interacts with D-ribose 5-phosphate. R166 provides a ligand contact to D-glyceraldehyde 3-phosphate. Residues G215 and 236–237 (GS) contribute to the D-ribose 5-phosphate site.

It belongs to the PdxS/SNZ family. As to quaternary structure, in the presence of PdxT, forms a dodecamer of heterodimers.

It carries out the reaction aldehydo-D-ribose 5-phosphate + D-glyceraldehyde 3-phosphate + L-glutamine = pyridoxal 5'-phosphate + L-glutamate + phosphate + 3 H2O + H(+). The protein operates within cofactor biosynthesis; pyridoxal 5'-phosphate biosynthesis. Functionally, catalyzes the formation of pyridoxal 5'-phosphate from ribose 5-phosphate (RBP), glyceraldehyde 3-phosphate (G3P) and ammonia. The ammonia is provided by the PdxT subunit. Can also use ribulose 5-phosphate and dihydroxyacetone phosphate as substrates, resulting from enzyme-catalyzed isomerization of RBP and G3P, respectively. The sequence is that of Pyridoxal 5'-phosphate synthase subunit PdxS from Staphylococcus aureus (strain Mu3 / ATCC 700698).